Consider the following 492-residue polypeptide: Protein nucleotidyltransferase YdiU (492 aa).

The ATP site is built by G91, G93, R94, K114, D126, G127, R180, and R187. D256 (proton acceptor) is an active-site residue. 2 residues coordinate Mg(2+): N257 and D266. D266 provides a ligand contact to ATP.

This sequence belongs to the SELO family. Mg(2+) serves as cofactor. Requires Mn(2+) as cofactor.

The enzyme catalyses L-seryl-[protein] + ATP = 3-O-(5'-adenylyl)-L-seryl-[protein] + diphosphate. It carries out the reaction L-threonyl-[protein] + ATP = 3-O-(5'-adenylyl)-L-threonyl-[protein] + diphosphate. The catalysed reaction is L-tyrosyl-[protein] + ATP = O-(5'-adenylyl)-L-tyrosyl-[protein] + diphosphate. It catalyses the reaction L-histidyl-[protein] + UTP = N(tele)-(5'-uridylyl)-L-histidyl-[protein] + diphosphate. The enzyme catalyses L-seryl-[protein] + UTP = O-(5'-uridylyl)-L-seryl-[protein] + diphosphate. It carries out the reaction L-tyrosyl-[protein] + UTP = O-(5'-uridylyl)-L-tyrosyl-[protein] + diphosphate. In terms of biological role, nucleotidyltransferase involved in the post-translational modification of proteins. It can catalyze the addition of adenosine monophosphate (AMP) or uridine monophosphate (UMP) to a protein, resulting in modifications known as AMPylation and UMPylation. In Synechococcus elongatus (strain ATCC 33912 / PCC 7942 / FACHB-805) (Anacystis nidulans R2), this protein is Protein nucleotidyltransferase YdiU.